The sequence spans 150 residues: Large ribosomal subunit protein uL22c (150 aa).

The protein belongs to the universal ribosomal protein uL22 family. Part of the 50S ribosomal subunit.

It is found in the plastid. In terms of biological role, this protein binds specifically to 23S rRNA. Functionally, the globular domain of the protein is located near the polypeptide exit tunnel on the outside of the subunit, while an extended beta-hairpin is found that lines the wall of the exit tunnel in the center of the 70S ribosome. In Orobanche minor (Small broomrape), this protein is Large ribosomal subunit protein uL22c (rpl22).